The chain runs to 340 residues: Ketol-acid reductoisomerase (NADP(+)) (340 aa).

In terms of domain architecture, KARI N-terminal Rossmann spans 1–183 (MAITVYYDKD…GGGRTGIIET (183 aa)). NADP(+)-binding positions include 26 to 29 (FGSQ), arginine 49, serine 52, serine 54, and 84 to 87 (DEIQ). Histidine 109 is an active-site residue. Glycine 135 contacts NADP(+). Positions 184 to 329 (TFKAETETDL…RNLRAMMPWI (146 aa)) constitute a KARI C-terminal knotted domain. The Mg(2+) site is built by aspartate 192, glutamate 196, glutamate 228, and glutamate 232. A substrate-binding site is contributed by serine 253.

Belongs to the ketol-acid reductoisomerase family. Mg(2+) serves as cofactor.

The catalysed reaction is (2R)-2,3-dihydroxy-3-methylbutanoate + NADP(+) = (2S)-2-acetolactate + NADPH + H(+). The enzyme catalyses (2R,3R)-2,3-dihydroxy-3-methylpentanoate + NADP(+) = (S)-2-ethyl-2-hydroxy-3-oxobutanoate + NADPH + H(+). It functions in the pathway amino-acid biosynthesis; L-isoleucine biosynthesis; L-isoleucine from 2-oxobutanoate: step 2/4. It participates in amino-acid biosynthesis; L-valine biosynthesis; L-valine from pyruvate: step 2/4. Involved in the biosynthesis of branched-chain amino acids (BCAA). Catalyzes an alkyl-migration followed by a ketol-acid reduction of (S)-2-acetolactate (S2AL) to yield (R)-2,3-dihydroxy-isovalerate. In the isomerase reaction, S2AL is rearranged via a Mg-dependent methyl migration to produce 3-hydroxy-3-methyl-2-ketobutyrate (HMKB). In the reductase reaction, this 2-ketoacid undergoes a metal-dependent reduction by NADPH to yield (R)-2,3-dihydroxy-isovalerate. This is Ketol-acid reductoisomerase (NADP(+)) from Campylobacter jejuni subsp. jejuni serotype O:23/36 (strain 81-176).